Consider the following 163-residue polypeptide: Early nodulin-like protein 20 (163 aa).

An N-terminal signal peptide occupies residues 1-25; it reads MMGKYLWALVYVTVMILIIVVEVES. A Phytocyanin domain is found at 26–126; that stretch reads SLHRVGGGRY…GMKLAITVLP (101 aa). 5 N-linked (GlcNAc...) asparagine glycosylation sites follow: Asn-42, Asn-63, Asn-73, Asn-88, and Asn-135. A disulfide bond links Cys-80 and Cys-114. Residue Ser-138 is the site of GPI-anchor amidated serine attachment. The propeptide at 139-163 is removed in mature form; that stretch reads TTTPLIPPNAITAAILIFAFKALLL.

The protein belongs to the early nodulin-like (ENODL) family.

The protein resides in the cell membrane. May act as a carbohydrate transporter. The protein is Early nodulin-like protein 20 of Arabidopsis thaliana (Mouse-ear cress).